The chain runs to 389 residues: Chalcone synthase 1 (389 aa).

Cysteine 164 is a catalytic residue.

It belongs to the thiolase-like superfamily. Chalcone/stilbene synthases family.

The catalysed reaction is (E)-4-coumaroyl-CoA + 3 malonyl-CoA + 3 H(+) = 2',4,4',6'-tetrahydroxychalcone + 3 CO2 + 4 CoA. The protein operates within secondary metabolite biosynthesis; flavonoid biosynthesis. The primary product of this enzyme is 4,2',4',6'-tetrahydroxychalcone (also termed naringenin-chalcone or chalcone) which can under specific conditions spontaneously isomerize into naringenin. The chain is Chalcone synthase 1 (CHS1) from Cicer arietinum (Chickpea).